The following is a 407-amino-acid chain: Imidazolonepropionase (407 aa).

Fe(3+) contacts are provided by His74 and His76. Positions 74 and 76 each coordinate Zn(2+). Arg83, Tyr146, and His179 together coordinate 4-imidazolone-5-propanoate. N-formimidoyl-L-glutamate is bound at residue Tyr146. A Fe(3+)-binding site is contributed by His244. His244 provides a ligand contact to Zn(2+). Gln247 is a binding site for 4-imidazolone-5-propanoate. Residue Asp319 participates in Fe(3+) binding. Residue Asp319 coordinates Zn(2+). The N-formimidoyl-L-glutamate site is built by Asn321 and Gly323. Thr324 is a 4-imidazolone-5-propanoate binding site.

Belongs to the metallo-dependent hydrolases superfamily. HutI family. Requires Zn(2+) as cofactor. The cofactor is Fe(3+).

The protein localises to the cytoplasm. The enzyme catalyses 4-imidazolone-5-propanoate + H2O = N-formimidoyl-L-glutamate. Its pathway is amino-acid degradation; L-histidine degradation into L-glutamate; N-formimidoyl-L-glutamate from L-histidine: step 3/3. Its function is as follows. Catalyzes the hydrolytic cleavage of the carbon-nitrogen bond in imidazolone-5-propanoate to yield N-formimidoyl-L-glutamate. It is the third step in the universal histidine degradation pathway. The protein is Imidazolonepropionase of Salmonella paratyphi C (strain RKS4594).